Consider the following 314-residue polypeptide: Cytosolic sulfotransferase 3 (314 aa).

71 to 76 is a binding site for 3'-phosphoadenylyl sulfate; that stretch reads KSGTLW. His-121 acts as the Proton acceptor in catalysis. Residues Arg-143, Ser-151, Tyr-209, and 275–277 each bind 3'-phosphoadenylyl sulfate; that span reads RKG.

Belongs to the sulfotransferase 1 family.

Its subcellular location is the cytoplasm. In terms of biological role, sulfotransferase that utilizes 3'-phospho-5'-adenylyl sulfate (PAPS) as sulfonate donor. This Arabidopsis thaliana (Mouse-ear cress) protein is Cytosolic sulfotransferase 3 (SOT3).